Consider the following 327-residue polypeptide: Thioredoxin reductase (327 aa).

FAD-binding positions include 10 to 13 (SGPA), 39 to 40 (IA), glutamine 44, asparagine 53, valine 86, cysteine 143, aspartate 286, and 293 to 295 (RQA). A disulfide bridge connects residues cysteine 140 and cysteine 143.

The protein belongs to the class-II pyridine nucleotide-disulfide oxidoreductase family. As to quaternary structure, homodimer. Requires FAD as cofactor.

Its subcellular location is the cytoplasm. It carries out the reaction [thioredoxin]-dithiol + NADP(+) = [thioredoxin]-disulfide + NADPH + H(+). Component of the thioredoxin-thioredoxin reductase system which may be involved in biosynthesis of penicillins and cephalosporins and may be important in determining the thiol-disulfide redox balance. This is Thioredoxin reductase (TRR1) from Pneumocystis jirovecii (Human pneumocystis pneumonia agent).